A 139-amino-acid polypeptide reads, in one-letter code: uncharacterized protein (139 aa).

The disordered stretch occupies residues 1–26 (MQLVREKRGAHQHVPRKTTEPQKVRG). Positions 17 to 26 (KTTEPQKVRG) are enriched in basic and acidic residues.

This is an uncharacterized protein from Ictalurid herpesvirus 1 (strain Auburn) (IcHV-1).